A 143-amino-acid chain; its full sequence is Trypsin inhibitor CMc (143 aa).

An N-terminal signal peptide occupies residues 1-24; the sequence is MASCSQHLLSAVAIFSVLAGVATA.

It belongs to the protease inhibitor I6 (cereal trypsin/alpha-amylase inhibitor) family. As to expression, endosperm.

The protein resides in the secreted. Trypsin inhibitor. No alpha-amylase inhibition detected. The protein is Trypsin inhibitor CMc (ITR2) of Hordeum vulgare (Barley).